A 128-amino-acid polypeptide reads, in one-letter code: Large ribosomal subunit protein bL12 (128 aa).

This sequence belongs to the bacterial ribosomal protein bL12 family. Homodimer. Part of the ribosomal stalk of the 50S ribosomal subunit. Forms a multimeric L10(L12)X complex, where L10 forms an elongated spine to which 2 to 4 L12 dimers bind in a sequential fashion. Binds GTP-bound translation factors.

Forms part of the ribosomal stalk which helps the ribosome interact with GTP-bound translation factors. Is thus essential for accurate translation. This chain is Large ribosomal subunit protein bL12, found in Thermosipho africanus (strain TCF52B).